The following is a 373-amino-acid chain: Histidinol-phosphate aminotransferase (373 aa).

Position 230 is an N6-(pyridoxal phosphate)lysine (K230).

This sequence belongs to the class-II pyridoxal-phosphate-dependent aminotransferase family. Histidinol-phosphate aminotransferase subfamily. Homodimer. Requires pyridoxal 5'-phosphate as cofactor.

It carries out the reaction L-histidinol phosphate + 2-oxoglutarate = 3-(imidazol-4-yl)-2-oxopropyl phosphate + L-glutamate. It functions in the pathway amino-acid biosynthesis; L-histidine biosynthesis; L-histidine from 5-phospho-alpha-D-ribose 1-diphosphate: step 7/9. In Synechococcus sp. (strain ATCC 27144 / PCC 6301 / SAUG 1402/1) (Anacystis nidulans), this protein is Histidinol-phosphate aminotransferase.